A 431-amino-acid polypeptide reads, in one-letter code: Dihydroorotase (431 aa).

Residues H59 and H61 each contribute to the Zn(2+) site. Residues 61-63 (HLR) and N93 each bind substrate. Residues D151, H178, H231, and D304 each contribute to the Zn(2+) site. The active site involves D304. Residues H308 and 322–323 (FG) each bind substrate.

Belongs to the metallo-dependent hydrolases superfamily. DHOase family. Class I DHOase subfamily. Zn(2+) is required as a cofactor.

The enzyme catalyses (S)-dihydroorotate + H2O = N-carbamoyl-L-aspartate + H(+). Its pathway is pyrimidine metabolism; UMP biosynthesis via de novo pathway; (S)-dihydroorotate from bicarbonate: step 3/3. Functionally, catalyzes the reversible cyclization of carbamoyl aspartate to dihydroorotate. This is Dihydroorotase from Caldanaerobacter subterraneus subsp. tengcongensis (strain DSM 15242 / JCM 11007 / NBRC 100824 / MB4) (Thermoanaerobacter tengcongensis).